The primary structure comprises 178 residues: Ribosome maturation factor RimM (178 aa).

The PRC barrel domain maps to 101-178 (ADEYYWYQLV…VMRVEWDADF (78 aa)).

The protein belongs to the RimM family. In terms of assembly, binds ribosomal protein uS19.

Its subcellular location is the cytoplasm. Its function is as follows. An accessory protein needed during the final step in the assembly of 30S ribosomal subunit, possibly for assembly of the head region. Essential for efficient processing of 16S rRNA. May be needed both before and after RbfA during the maturation of 16S rRNA. It has affinity for free ribosomal 30S subunits but not for 70S ribosomes. This chain is Ribosome maturation factor RimM, found in Pseudomonas putida (strain ATCC 700007 / DSM 6899 / JCM 31910 / BCRC 17059 / LMG 24140 / F1).